The sequence spans 125 residues: Acidic phospholipase A2 HTe (125 aa).

Intrachain disulfides connect Cys11-Cys77, Cys27-Cys124, Cys29-Cys45, Cys44-Cys105, Cys51-Cys98, Cys61-Cys91, and Cys84-Cys96. Positions 28, 30, and 32 each coordinate Ca(2+). His48 is an active-site residue. Asp49 provides a ligand contact to Ca(2+). Asp99 is a catalytic residue.

This sequence belongs to the phospholipase A2 family. Group I subfamily. D49 sub-subfamily. The cofactor is Ca(2+). No glycosylation was detected on this protein. In terms of tissue distribution, expressed by the venom gland.

The protein resides in the secreted. It catalyses the reaction a 1,2-diacyl-sn-glycero-3-phosphocholine + H2O = a 1-acyl-sn-glycero-3-phosphocholine + a fatty acid + H(+). In terms of biological role, snake venom phospholipase A2 (PLA2) that blocks neuromuscular transmission, but that does not produce blockade by virtue of a selective action on nerve endings. Instead, the toxin acts both on nerve and on muscle. PLA2 catalyzes the calcium-dependent hydrolysis of the 2-acyl groups in 3-sn-phosphoglycerides. This chain is Acidic phospholipase A2 HTe, found in Notechis scutatus scutatus (Mainland tiger snake).